Here is a 231-residue protein sequence, read N- to C-terminus: Putative N-acetylmannosamine-6-phosphate 2-epimerase (231 aa).

It belongs to the NanE family.

It catalyses the reaction an N-acyl-D-glucosamine 6-phosphate = an N-acyl-D-mannosamine 6-phosphate. The protein operates within amino-sugar metabolism; N-acetylneuraminate degradation; D-fructose 6-phosphate from N-acetylneuraminate: step 3/5. Its function is as follows. Converts N-acetylmannosamine-6-phosphate (ManNAc-6-P) to N-acetylglucosamine-6-phosphate (GlcNAc-6-P). In Listeria monocytogenes serotype 4b (strain F2365), this protein is Putative N-acetylmannosamine-6-phosphate 2-epimerase.